The sequence spans 474 residues: tRNA-2-methylthio-N(6)-dimethylallyladenosine synthase (474 aa).

The MTTase N-terminal domain maps to 3-120 (KKLHIKTWGC…LPDMIEQVRR (118 aa)). Residues cysteine 12, cysteine 49, cysteine 83, cysteine 157, cysteine 161, and cysteine 164 each contribute to the [4Fe-4S] cluster site. The region spanning 143–375 (RAEGPTAFVS…QDRITQQAMR (233 aa)) is the Radical SAM core domain. Residues 378 to 441 (RHMMGTVQRI…TNSLRGKFIR (64 aa)) enclose the TRAM domain.

Belongs to the methylthiotransferase family. MiaB subfamily. As to quaternary structure, monomer. It depends on [4Fe-4S] cluster as a cofactor.

The protein resides in the cytoplasm. It catalyses the reaction N(6)-dimethylallyladenosine(37) in tRNA + (sulfur carrier)-SH + AH2 + 2 S-adenosyl-L-methionine = 2-methylsulfanyl-N(6)-dimethylallyladenosine(37) in tRNA + (sulfur carrier)-H + 5'-deoxyadenosine + L-methionine + A + S-adenosyl-L-homocysteine + 2 H(+). Catalyzes the methylthiolation of N6-(dimethylallyl)adenosine (i(6)A), leading to the formation of 2-methylthio-N6-(dimethylallyl)adenosine (ms(2)i(6)A) at position 37 in tRNAs that read codons beginning with uridine. The protein is tRNA-2-methylthio-N(6)-dimethylallyladenosine synthase of Shewanella putrefaciens (strain CN-32 / ATCC BAA-453).